The chain runs to 964 residues: Pumilio homolog 3 (964 aa).

Positions 1-22 (MMIPELGRRPMHRGNEDSSFGD) are disordered. Phosphoserine is present on Ser192. Disordered stretches follow at residues 204-235 (PVVQQPSRPASRNTFDENVDSNNNLSPSASQG), 256-300 (GTPD…TSGL), and 343-388 (DGHN…VANP). Polar residues-rich tracts occupy residues 207–216 (QQPSRPASRN) and 223–234 (DSNNNLSPSASQ). The residue at position 257 (Thr257) is a Phosphothreonine. Composition is skewed to polar residues over residues 287-300 (TSNQSPFNGVTSGL) and 356-384 (RSDQARGTASCRNSQMRGSQGSAYNSGSG). The PUM-HD domain occupies 606–946 (FGSSMLEEFK…HIVARVEKLV (341 aa)). Pumilio repeat units follow at residues 626–661 (EIAGHVVEFSSDQYGSRFIQQKLETATTDEKNMVYE), 662–697 (EIMPKALALMTDVFGNYVIQKFFEHGLPPQRRELGE), 698–733 (KLIDNVLPLSLQMYGCRVIQKAIEVVDLDQKIQMVK), 734–769 (ELDGHVMRCVRDQNGNHVVQKCIECVPEENIEFIIS), 770–806 (TFFGHVVTLSTHPYGCRVIQRVLEHCHNPDTQSKVME), 807–842 (EILSTVSMLTQDQYGNYVVQHVLEHGKPDERTVIIK), 843–878 (ELAGKIVQMSQQKFASNVVEKCLTFGGPEERELLVN), and 879–920 (EMLG…LILT).

The protein resides in the cytoplasm. Functionally, sequence-specific RNA-binding protein that regulates translation and mRNA stability by binding the 3'-UTR of target mRNAs. Binds the APUM-binding elements (APBEs) in the 3'-UTR mRNA sequence of CLV1, PNH, WUS and FAS2. This is Pumilio homolog 3 (APUM3) from Arabidopsis thaliana (Mouse-ear cress).